The following is a 238-amino-acid chain: Large ribosomal subunit protein uL1 (238 aa).

Belongs to the universal ribosomal protein uL1 family. As to quaternary structure, part of the 50S ribosomal subunit.

Its function is as follows. Binds directly to 23S rRNA. The L1 stalk is quite mobile in the ribosome, and is involved in E site tRNA release. Functionally, protein L1 is also a translational repressor protein, it controls the translation of the L11 operon by binding to its mRNA. The chain is Large ribosomal subunit protein uL1 from Rippkaea orientalis (strain PCC 8801 / RF-1) (Cyanothece sp. (strain PCC 8801)).